Here is a 358-residue protein sequence, read N- to C-terminus: MRKIIHIDMDCYFAAVEMRDFPEYRGKPLAVGGSSDRRGVISTCSYEARKFGVRSAMATAYAFKLCPDLILVPGRMQVYKDVSLQIREIFSRYTQLIEPLSLDEAYLDVSECQQYKGSATLIAQAIRRDILAETGLTASAGIAPVKFLAKVASDLNKPNGQYVITPETLPEFVKTLSLRKIPGVGKVTAEKLSSLGLNTCGDVQAYSKPELLARFGKFGGVLIERSQGIDERGISADRERKSVGVETTLAKDIYSLEQCQQVMPGLIQELALRLSRSAKERKIHKQVVKLKFNDFKQTTIEHRSDEVSIVMFYDLLAQAMARQEGRGIRLLGISVGLADSILAVPEIPNAQTQLDLAL.

The region spanning 4–185 (IIHIDMDCYF…LSLRKIPGVG (182 aa)) is the UmuC domain. 2 residues coordinate Mg(2+): aspartate 8 and aspartate 103. Glutamate 104 is an active-site residue.

It belongs to the DNA polymerase type-Y family. In terms of assembly, monomer. Mg(2+) is required as a cofactor.

Its subcellular location is the cytoplasm. The catalysed reaction is DNA(n) + a 2'-deoxyribonucleoside 5'-triphosphate = DNA(n+1) + diphosphate. In terms of biological role, poorly processive, error-prone DNA polymerase involved in untargeted mutagenesis. Copies undamaged DNA at stalled replication forks, which arise in vivo from mismatched or misaligned primer ends. These misaligned primers can be extended by PolIV. Exhibits no 3'-5' exonuclease (proofreading) activity. May be involved in translesional synthesis, in conjunction with the beta clamp from PolIII. In Shewanella baltica (strain OS185), this protein is DNA polymerase IV.